We begin with the raw amino-acid sequence, 497 residues long: Probable cytosol aminopeptidase (497 aa).

Mn(2+) is bound by residues Lys263 and Asp268. Lys275 is a catalytic residue. Residues Asp286, Asp345, and Glu347 each coordinate Mn(2+). Arg349 is a catalytic residue.

This sequence belongs to the peptidase M17 family. Mn(2+) is required as a cofactor.

The protein resides in the cytoplasm. The catalysed reaction is Release of an N-terminal amino acid, Xaa-|-Yaa-, in which Xaa is preferably Leu, but may be other amino acids including Pro although not Arg or Lys, and Yaa may be Pro. Amino acid amides and methyl esters are also readily hydrolyzed, but rates on arylamides are exceedingly low.. It catalyses the reaction Release of an N-terminal amino acid, preferentially leucine, but not glutamic or aspartic acids.. In terms of biological role, presumably involved in the processing and regular turnover of intracellular proteins. Catalyzes the removal of unsubstituted N-terminal amino acids from various peptides. This chain is Probable cytosol aminopeptidase, found in Sinorhizobium medicae (strain WSM419) (Ensifer medicae).